Reading from the N-terminus, the 258-residue chain is UPF0246 protein YaaA (258 aa).

This sequence belongs to the UPF0246 family.

The sequence is that of UPF0246 protein YaaA from Escherichia coli (strain UTI89 / UPEC).